Reading from the N-terminus, the 589-residue chain is Ubiquilin-1 (589 aa).

Residues Met1–Pro11 show a composition bias toward gly residues. 2 disordered regions span residues Met1–Lys35 and Asn110–Asn145. Ala2 carries the N-acetylalanine modification. Positions Gly12–Lys35 are enriched in low complexity. In terms of domain architecture, Ubiquitin-like spans Met37–Arg111. The span at Asn110–Gly124 shows a compositional bias: polar residues. A compositionally biased stretch (low complexity) spans Ser125 to Asn145. Positions Gln178–Pro428 are interaction with UBXN4. STI1 domains lie at Asn182 to Met210 and Asn212 to Met251. Positions Pro295 to Met371 are disordered. Positions Leu299–Arg313 are enriched in polar residues. Low complexity predominate over residues Gln327–Ala360. STI1 domains lie at Asn387–Met434 and Leu438–Leu470. Residues Leu488 to Pro520 are disordered. Residues Gly489–Gly499 show a composition bias toward gly residues. Positions Glu509 to Pro520 are enriched in polar residues. A UBA domain is found at Arg546–Ser586.

As to quaternary structure, monomer and homodimer. Heterodimer with UBQLN2. Binds CD47, NBL1, GABRA1, GABRA2, GABRA3, GABRA6, GABRB1, GABRB2 and GABRB3. Binds UBE3A, BTRC, P4HB and MTOR. Interacts with the proteasome 19S subunit. Interacts (via ubiquitin-like domain) with TREX1; the interaction is direct and may control TREX1 subcellular location. Forms a complex with UBXN4 and VCP. Interacts (via UBA domain) with UBQLN4 (via ubiquitin-like domain). Found in a complex with UBQLN2 and MAP1LC3A/B/C. The monomeric form interacts with PSEN1 and PSEN2. Interacts with ORAI1. Interacts (via UBA domain) with TICAM1. Interacts with EPS15. Interacts (via UBA domain) with UBA52 and (via ubiquitin-like domain) with PSMD3 and PSMD4. Interacts with HERPUD1. Interacts with MAP1LC3A/B/C in the presence of UBQLN4. Interacts (via ubiquitin-like domain) with EPS15 (via UIM domains) and both the ubiquitinated and non-ubiquitinated forms can interact with EPS15. Interacts (via ubiquitin-like domain) with EPS15L1, HGS (via UIM domain) and STAM2 (via UIM domain). Interacts with BCL2L10/BCL-B; in the cytoplasm. Post-translationally, degraded during both macroautophagy and during chaperone-mediated autophagy (CMA). In terms of processing, phosphorylated. Ubiquitinated.

It localises to the nucleus. The protein localises to the cytoplasm. Its subcellular location is the endoplasmic reticulum. It is found in the cytoplasmic vesicle. The protein resides in the autophagosome. It localises to the cell membrane. Functionally, plays an important role in the regulation of different protein degradation mechanisms and pathways including ubiquitin-proteasome system (UPS), autophagy and endoplasmic reticulum-associated protein degradation (ERAD) pathway. Mediates the proteasomal targeting of misfolded or accumulated proteins for degradation by binding (via UBA domain) to their polyubiquitin chains and by interacting (via ubiquitin-like domain) with the subunits of the proteasome. Plays a role in the ERAD pathway via its interaction with ER-localized proteins UBXN4, VCP and HERPUD1 and may form a link between the polyubiquitinated ERAD substrates and the proteasome. Plays a role in unfolded protein response (UPR) by attenuating the induction of UPR-inducible genes, DDTI3/CHOP, HSPA5 and PDIA2 during ER stress. Involved in the regulation of macroautophagy and autophagosome formation; required for maturation of autophagy-related protein LC3 from the cytosolic form LC3-I to the membrane-bound form LC3-II and may assist in the maturation of autophagosomes to autolysosomes by mediating autophagosome-lysosome fusion. Negatively regulates the TICAM1/TRIF-dependent toll-like receptor signaling pathway by decreasing the abundance of TICAM1 via the autophagic pathway. Promotes the ubiquitination and lysosomal degradation of ORAI1, consequently down-regulating the ORAI1-mediated Ca2+ mobilization. Suppresses the maturation and proteasomal degradation of amyloid beta A4 protein (A4) by stimulating the lysine 63 (K63)-linked polyubiquitination. Delays the maturation of A4 by sequestering it in the Golgi apparatus and preventing its transport to the cell surface for subsequent processing. Ubiquitinates BCL2L10 and thereby stabilizes protein abundance. This is Ubiquilin-1 (UBQLN1) from Pongo abelii (Sumatran orangutan).